The primary structure comprises 369 residues: p21-activated protein kinase-interacting protein 1-like (369 aa).

WD repeat units lie at residues 33–70 (AHTA…EHGA), 73–111 (QHNG…CLKS), 114–153 (AHKG…SAFI), 195–233 (TIEK…CLCE), and 236–278 (AREN…NNVP). Positions 311–369 (ATSTEANESEKPSAVKKKKVCGMNKSGKLTKQRRRIVPAKRKLEAPLQKKKKKKQNSSE) are disordered. Basic residues-rich tracts occupy residues 338–350 (KLTK…VPAK) and 358–369 (QKKKKKKQNSSE).

Its subcellular location is the nucleus. It localises to the nucleolus. In terms of biological role, negatively regulates the PAK1 kinase. PAK1 is a member of the PAK kinase family, which has been shown to play a positive role in the regulation of signaling pathways involving MAPK8 and RELA. PAK1 exists as an inactive homodimer, which is activated by binding of small GTPases such as CDC42 to an N-terminal regulatory domain. PAK1IP1 also binds to the N-terminus of PAK1, and inhibits the specific activation of PAK1 by CDC42. May be involved in ribosomal large subunit assembly. In Gallus gallus (Chicken), this protein is p21-activated protein kinase-interacting protein 1-like (PAK1IP1).